Reading from the N-terminus, the 380-residue chain is DNA replication and repair protein RecF (380 aa).

ATP is bound at residue 30–37 (GNNAQGKS).

This sequence belongs to the RecF family.

It is found in the cytoplasm. Its function is as follows. The RecF protein is involved in DNA metabolism; it is required for DNA replication and normal SOS inducibility. RecF binds preferentially to single-stranded, linear DNA. It also seems to bind ATP. The sequence is that of DNA replication and repair protein RecF from Crocosphaera subtropica (strain ATCC 51142 / BH68) (Cyanothece sp. (strain ATCC 51142)).